A 677-amino-acid chain; its full sequence is Threonine--tRNA ligase (677 aa).

In terms of domain architecture, TGS spans 1–59 (MAQATISITVNGEAKEVEATTTGVELFAEDKNIIAVKINGENRDLYTPLNDGDTVDPIA). Positions 255–561 (DHRKLGAEMD…LLEHYAGAFP (307 aa)) are catalytic. Residues Cys360, His411, and His538 each contribute to the Zn(2+) site.

Belongs to the class-II aminoacyl-tRNA synthetase family. As to quaternary structure, homodimer. It depends on Zn(2+) as a cofactor.

It localises to the cytoplasm. The enzyme catalyses tRNA(Thr) + L-threonine + ATP = L-threonyl-tRNA(Thr) + AMP + diphosphate + H(+). In terms of biological role, catalyzes the attachment of threonine to tRNA(Thr) in a two-step reaction: L-threonine is first activated by ATP to form Thr-AMP and then transferred to the acceptor end of tRNA(Thr). Also edits incorrectly charged L-seryl-tRNA(Thr). In Bifidobacterium longum (strain DJO10A), this protein is Threonine--tRNA ligase.